A 351-amino-acid chain; its full sequence is uncharacterized protein (351 aa).

Residues aspartate 215, aspartate 226, histidine 290, glutamate 319, and glutamate 333 each contribute to the Mn(2+) site.

The protein belongs to the peptidase M24B family. Requires Mn(2+) as cofactor.

This is an uncharacterized protein from Staphylococcus aureus (strain USA300).